Here is a 644-residue protein sequence, read N- to C-terminus: Threonine--tRNA ligase (644 aa).

Residues 3-64 (EMIRITFPDG…QEDGSISIIT (62 aa)) enclose the TGS domain. The segment at 245 to 542 (DHRKLGKELE…LIEEYKGAFP (298 aa)) is catalytic. Zn(2+) contacts are provided by C338, H389, and H519.

The protein belongs to the class-II aminoacyl-tRNA synthetase family. In terms of assembly, homodimer. It depends on Zn(2+) as a cofactor.

Its subcellular location is the cytoplasm. The enzyme catalyses tRNA(Thr) + L-threonine + ATP = L-threonyl-tRNA(Thr) + AMP + diphosphate + H(+). Its function is as follows. Catalyzes the attachment of threonine to tRNA(Thr) in a two-step reaction: L-threonine is first activated by ATP to form Thr-AMP and then transferred to the acceptor end of tRNA(Thr). Also edits incorrectly charged L-seryl-tRNA(Thr). This Geobacillus sp. (strain WCH70) protein is Threonine--tRNA ligase.